Reading from the N-terminus, the 393-residue chain is MANDFLFTSESVSEGHPDKVADQISDAILDAIFAQDPYSRVAAETLTNTGLVVLAGEITTGANVDYIQVARDTIKRIGYDNTDYGIDYKGCAVLVAYDKQSQDIAQGVDKASDDELNTGAGDQGLMFGYACDETPELMPAPIYYAHRLVERQAQLRKDGRLPFLRPDAKSQVTMRYVDGKPHSIDTVVLSTQHSPDQSETATKMKASFTEAIIEEIIKPVLPSEWLQDTKYLINPTGRFVVGGPQGDCGLTGRKIIVDTYGGACPHGGGAFSGKDPTKVDRSAAYAARYVAKNIVAAGLARQCQIQVAYAIGVARPMNITVYTEGTGVIPDAEIAKLVAAHFDLRPKGIIQMLDLLRPIYSKTAAYGHFGREEPEFTWERTDKAAVLRAAAGL.

His16 lines the ATP pocket. Asp18 contacts Mg(2+). Glu44 provides a ligand contact to K(+). Positions 57 and 100 each coordinate L-methionine. The flexible loop stretch occupies residues 100–110; that stretch reads QSQDIAQGVDK. ATP-binding positions include 167-169, 238-239, Asp247, 253-254, Ala270, and Lys274; these read DAK, RF, and RK. Position 247 (Asp247) interacts with L-methionine. Lys278 contributes to the L-methionine binding site.

This sequence belongs to the AdoMet synthase family. Homotetramer; dimer of dimers. Mg(2+) serves as cofactor. The cofactor is K(+).

Its subcellular location is the cytoplasm. It catalyses the reaction L-methionine + ATP + H2O = S-adenosyl-L-methionine + phosphate + diphosphate. It participates in amino-acid biosynthesis; S-adenosyl-L-methionine biosynthesis; S-adenosyl-L-methionine from L-methionine: step 1/1. In terms of biological role, catalyzes the formation of S-adenosylmethionine (AdoMet) from methionine and ATP. The overall synthetic reaction is composed of two sequential steps, AdoMet formation and the subsequent tripolyphosphate hydrolysis which occurs prior to release of AdoMet from the enzyme. The polypeptide is S-adenosylmethionine synthase (Delftia acidovorans (strain DSM 14801 / SPH-1)).